We begin with the raw amino-acid sequence, 236 residues long: 2-phospho-L-lactate guanylyltransferase (236 aa).

Belongs to the CofC family. In terms of assembly, homodimer.

It carries out the reaction (2S)-2-phospholactate + GTP + H(+) = (2S)-lactyl-2-diphospho-5'-guanosine + diphosphate. It participates in cofactor biosynthesis; coenzyme F420 biosynthesis. Its function is as follows. Guanylyltransferase that catalyzes the activation of (2S)-2-phospholactate (2-PL) as (2S)-lactyl-2-diphospho-5'-guanosine, via the condensation of 2-PL with GTP. It is involved in the biosynthesis of coenzyme F420, a hydride carrier cofactor. In Natrialba magadii (strain ATCC 43099 / DSM 3394 / CCM 3739 / CIP 104546 / IAM 13178 / JCM 8861 / NBRC 102185 / NCIMB 2190 / MS3) (Natronobacterium magadii), this protein is 2-phospho-L-lactate guanylyltransferase.